The primary structure comprises 271 residues: Formamidopyrimidine-DNA glycosylase (271 aa).

The active-site Schiff-base intermediate with DNA is the Pro2. Catalysis depends on Glu3, which acts as the Proton donor. The active-site Proton donor; for beta-elimination activity is Lys57. Residues His90, Arg109, and Lys151 each contribute to the DNA site. The segment at 236-270 (HVYGRGGETCTSCGNLLSEIRLGQRTTVFCGICQT) adopts an FPG-type zinc-finger fold. The active-site Proton donor; for delta-elimination activity is Arg260.

Belongs to the FPG family. In terms of assembly, monomer. The cofactor is Zn(2+).

It catalyses the reaction Hydrolysis of DNA containing ring-opened 7-methylguanine residues, releasing 2,6-diamino-4-hydroxy-5-(N-methyl)formamidopyrimidine.. The enzyme catalyses 2'-deoxyribonucleotide-(2'-deoxyribose 5'-phosphate)-2'-deoxyribonucleotide-DNA = a 3'-end 2'-deoxyribonucleotide-(2,3-dehydro-2,3-deoxyribose 5'-phosphate)-DNA + a 5'-end 5'-phospho-2'-deoxyribonucleoside-DNA + H(+). Involved in base excision repair of DNA damaged by oxidation or by mutagenic agents. Acts as a DNA glycosylase that recognizes and removes damaged bases. Has a preference for oxidized purines, such as 7,8-dihydro-8-oxoguanine (8-oxoG). Has AP (apurinic/apyrimidinic) lyase activity and introduces nicks in the DNA strand. Cleaves the DNA backbone by beta-delta elimination to generate a single-strand break at the site of the removed base with both 3'- and 5'-phosphates. The polypeptide is Formamidopyrimidine-DNA glycosylase (Shewanella sp. (strain W3-18-1)).